A 189-amino-acid polypeptide reads, in one-letter code: H/ACA ribonucleoprotein complex subunit 1-like protein 2 (189 aa).

A compositionally biased stretch (gly residues) spans 1 to 12 (MRPPRGGGSFRG). Disordered stretches follow at residues 1–39 (MRPPRGGGSFRGRGGRDNGGRGRGRGRGRGRFGGGNYDE) and 129–189 (RFLP…RGRA). Over residues 162 to 177 (GRGAPRGASRGFQPRG) the composition is skewed to low complexity.

It belongs to the GAR1 family. As to quaternary structure, component of the small nucleolar ribonucleoprotein particle containing H/ACA-type snoRNAs (H/ACA snoRNPs).

It localises to the nucleus. It is found in the nucleolus. Functionally, required for ribosome biogenesis. Part of a complex which catalyzes pseudouridylation of rRNA. This involves the isomerization of uridine such that the ribose is subsequently attached to C5, instead of the normal N1. Pseudouridine ('psi') residues may serve to stabilize the conformation of rRNAs. The polypeptide is H/ACA ribonucleoprotein complex subunit 1-like protein 2 (Arabidopsis thaliana (Mouse-ear cress)).